The chain runs to 281 residues: F-actin-capping protein subunit alpha (281 aa).

This sequence belongs to the F-actin-capping protein alpha subunit family. In terms of assembly, component of the F-actin capping complex, composed of a heterodimer of an alpha and a beta subunit.

The protein localises to the cytoplasm. It localises to the cytoskeleton. In terms of biological role, F-actin-capping proteins bind in a Ca(2+)-independent manner to the fast growing ends of actin filaments (barbed end) thereby blocking the exchange of subunits at these ends. Unlike other capping proteins (such as gelsolin and severin), these proteins do not sever actin filaments. The chain is F-actin-capping protein subunit alpha (acpB) from Dictyostelium discoideum (Social amoeba).